The sequence spans 500 residues: Cytochrome P450 71B35 (500 aa).

Residues 1–21 (MAHIWLLPLIFLVCILLAVFN) form a helical membrane-spanning segment. A heme-binding site is contributed by Cys439.

The protein belongs to the cytochrome P450 family. Heme serves as cofactor.

The protein localises to the membrane. The sequence is that of Cytochrome P450 71B35 (CYP71B35) from Arabidopsis thaliana (Mouse-ear cress).